We begin with the raw amino-acid sequence, 388 residues long: Succinate--CoA ligase [ADP-forming] subunit beta (388 aa).

The 236-residue stretch at 9-244 (KEIFRSMGVA…LEEEDPKEIE (236 aa)) folds into the ATP-grasp domain. Residues Lys-46, 53-55 (GRG), Glu-99, Cys-102, and Glu-107 each bind ATP. 2 residues coordinate Mg(2+): Asn-199 and Asp-213. Substrate contacts are provided by residues Asn-264 and 321–323 (GIM).

It belongs to the succinate/malate CoA ligase beta subunit family. In terms of assembly, heterotetramer of two alpha and two beta subunits. Mg(2+) serves as cofactor.

The catalysed reaction is succinate + ATP + CoA = succinyl-CoA + ADP + phosphate. It carries out the reaction GTP + succinate + CoA = succinyl-CoA + GDP + phosphate. Its pathway is carbohydrate metabolism; tricarboxylic acid cycle; succinate from succinyl-CoA (ligase route): step 1/1. Its function is as follows. Succinyl-CoA synthetase functions in the citric acid cycle (TCA), coupling the hydrolysis of succinyl-CoA to the synthesis of either ATP or GTP and thus represents the only step of substrate-level phosphorylation in the TCA. The beta subunit provides nucleotide specificity of the enzyme and binds the substrate succinate, while the binding sites for coenzyme A and phosphate are found in the alpha subunit. The chain is Succinate--CoA ligase [ADP-forming] subunit beta from Staphylococcus aureus (strain MRSA252).